The chain runs to 371 residues: DNA replication and repair protein RecF (371 aa).

30–37 (GENAQGKT) serves as a coordination point for ATP.

Belongs to the RecF family.

The protein localises to the cytoplasm. The RecF protein is involved in DNA metabolism; it is required for DNA replication and normal SOS inducibility. RecF binds preferentially to single-stranded, linear DNA. It also seems to bind ATP. The polypeptide is DNA replication and repair protein RecF (Staphylococcus epidermidis (strain ATCC 35984 / DSM 28319 / BCRC 17069 / CCUG 31568 / BM 3577 / RP62A)).